A 1890-amino-acid chain; its full sequence is Proteasome-associated protein ECM29 homolog (1890 aa).

HEAT repeat units follow at residues 6 to 29, 30 to 67, 130 to 167, 226 to 263, 294 to 330, 334 to 354, 355 to 395, 459 to 496, 498 to 523, 524 to 561, 565 to 602, 685 to 722, 776 to 813, 843 to 882, 938 to 975, 980 to 1018, 1118 to 1155, and 1159 to 1196; these read NAEIELLERVLLRLGNADSDEKLE, AAVGKFLTPVILKMNSPHNVVRTKVVEVLTHIKRRLSS, DKLFALLLPVLSDMKIPDDPTQRSKLLDLQDKPAICAN, FSDLQIFVPLVVASADTRFSVATPAITELSKLCTMLDF, RVRQKLLQYLIKCRGKSINVTKGLQVTFDGFFGTNTN, KVLALQFMELLLRDGPRELVS, KVSK…SFPQ, GQQHLLLAMLLDNAESKVQIVQNVTSVFLTSCYPEYYA, ARYLLLLIAGERNSLRENVTTYLYGT, SKKDHINYSMLSSIDHSKNRISSESISDFNHLSLEQRR, PSFQVMMSHVHEMAEKRLKKNTACVVVGRTKLPYSLEV, AKQLHLLEPLGNTLKDVSETMRINVAQVYGILWAFGLS, PQFVNAVKIISKCLCESQWLLVSAAVKCISMIGKAVEI, STKLVIFGVVFQLLRSSSARQKIREDSARCLGYLAIGDGE, DDFDQFLNSLIRLVTDPNPHSRQAISVWLLAVVKHCSQ, LAKKELLQFAFTELLSDDSEFVQDVASRGLGLVYSISDS, PYLGKIIPRLYRYKYDPTPKIQNSMISIWDTIVTDSKE, and RYYWEILRELLDNLTCKEWRVRIACCLAVRDLLNRPNG. The residue at position 1213 (Ser1213) is a Phosphoserine. HEAT repeat units follow at residues 1271–1309, 1313–1350, 1378–1415, 1416–1457, 1497–1534, 1541–1578, 1583–1620, and 1623–1660; these read AVASSILPFLLETGVGHKVPEIRRVSIKTISDMIDSSGS, PHLATLIPCLLRATGELENTKLSYVSTRLGADNEAQEA, SVLEKMTPEVLELMKGSVNLGTKIGCAHFVCLISIRLG, KEMT…LAKE, DYMDSMLPLIFFAMHEEPNEETKANVELWKDLWHDVSP, LNLNVIIPKLESSLTDASWSRKAQAANAIQTIATRLSS, PDRLRLIKLLLSGLQGRTFEGKERLLQALAALTKGLDR, and QICSSIIDAAMREARKREPVYRTMALASLGEILDQLEA. The interval 1680–1702 is disordered; it reads RKESDDEDEPNTSQELSADERNK. Ser1683 carries the post-translational modification Phosphoserine. Residue Thr1691 is modified to Phosphothreonine. Ser1692 carries the post-translational modification Phosphoserine. HEAT repeat units follow at residues 1751–1788 and 1826–1863; these read PVQVSLLAALTKYIERLHVFDESAQVPDLTQINQEKKI and KEALNIVLMLIKRLSGSGNGNQQPLRLIKQSFESNLEK.

As to quaternary structure, associated with the proteasome.

Its subcellular location is the cytoplasm. The chain is Proteasome-associated protein ECM29 homolog from Drosophila melanogaster (Fruit fly).